A 727-amino-acid chain; its full sequence is Polyribonucleotide nucleotidyltransferase (727 aa).

2 residues coordinate Mg(2+): Asp-488 and Asp-494. Residues 555-614 form the KH domain; that stretch reads PKLYTMKINPEKIRDVIGKGGATIRALTDETGCQINIEEDGTITIAATEAAKADEAKRRI. Residues 624–692 enclose the S1 motif domain; that stretch reads GKIYEGPVTK…DKGRVKLSMK (69 aa). Positions 691 to 727 are disordered; that stretch reads MKALADRPAGDSGRPAPAERGERRERRDGGASEQQQQ. The segment covering 707-720 has biased composition (basic and acidic residues); that stretch reads PAERGERRERRDGG.

The protein belongs to the polyribonucleotide nucleotidyltransferase family. Mg(2+) is required as a cofactor.

Its subcellular location is the cytoplasm. The catalysed reaction is RNA(n+1) + phosphate = RNA(n) + a ribonucleoside 5'-diphosphate. In terms of biological role, involved in mRNA degradation. Catalyzes the phosphorolysis of single-stranded polyribonucleotides processively in the 3'- to 5'-direction. In Acidovorax sp. (strain JS42), this protein is Polyribonucleotide nucleotidyltransferase.